We begin with the raw amino-acid sequence, 94 residues long: MPKLAVVLLVLLILPLSYFDAGGQAVQGDWRGNRLARDLQRGGRDDESECIINTRDSPWGRCCRTRMCGSMCCPRNGCTCVYHWRRGHGCSCPG.

An N-terminal signal peptide occupies residues Met-1 to Ala-25. A propeptide spanning residues Val-26 to Arg-44 is cleaved from the precursor. Residues Glu-47 and Glu-49 each carry the 4-carboxyglutamate modification. Cystine bridges form between Cys-63–Cys-72, Cys-68–Cys-80, Cys-73–Cys-90, and Cys-78–Cys-92.

The protein belongs to the conotoxin D superfamily. Hetero-, homo- or pseudo-homodimer (identical sequence, different post-translational modifications). As to expression, expressed by the venom duct.

It is found in the secreted. Alpha-conotoxins act on postsynaptic membranes, they bind to the nicotinic acetylcholine receptors (nAChR) and thus inhibit them. Through its two C-terminal domains, this homodimeric protein would bind to two nAChR allosteric sites, located outside the nAChR C-loop of the principal binding face and at the adjacent binding interface in a clockwise direction. This toxin specifically blocks mammalian neuronal nAChR of the alpha-7/CHRNA7, alpha-3-beta-2/CHRNA3-CHRNB2 and alpha-4-beta-2/CHRNA4-CHRNB2 subtypes. The chain is Alpha-conotoxin-like Vt20.1 from Conus planorbis (Planorbis cone).